The following is a 272-amino-acid chain: MFDIIKAVIIGIVEGLTEFLPISSTGHIDLVNHVIKLSQSQDFISMFEYVIQFGAILAVVLLYFNKLNPFSKPTAKARNATWQLWAKVIIAVLPSAVVGLPLNSWMDEHLHTPIVVATTLIVYGILFIILENYLKNKSAHITTLADITYQTALLIGLFQVLSIVPGTSRSGATILGALLIGTSRYVATEFSFFLAIPTMVGVLIIKIGKYLWQGNGFSGEQWAVLMTGSIVSFLVAIVAIKWLLKFVQTHDFKPFGWYRIALGAIVLLVMFI.

Helical transmembrane passes span 2–22 (FDII…FLPI), 43–63 (FISM…VLLY), 82–102 (WQLW…GLPL), 110–130 (LHTP…FIIL), 185–205 (YVAT…VLII), 224–244 (VLMT…KWLL), and 252–272 (FKPF…VMFI).

It belongs to the UppP family.

Its subcellular location is the cell membrane. The enzyme catalyses di-trans,octa-cis-undecaprenyl diphosphate + H2O = di-trans,octa-cis-undecaprenyl phosphate + phosphate + H(+). In terms of biological role, catalyzes the dephosphorylation of undecaprenyl diphosphate (UPP). Confers resistance to bacitracin. The protein is Undecaprenyl-diphosphatase of Lacticaseibacillus casei (strain BL23) (Lactobacillus casei).